The sequence spans 109 residues: FK506-binding protein (109 aa).

In terms of domain architecture, PPIase FKBP-type spans 20–108 (GKEITVHYTG…IFEVELLKVY (89 aa)).

Belongs to the FKBP-type PPIase family.

It carries out the reaction [protein]-peptidylproline (omega=180) = [protein]-peptidylproline (omega=0). PPIases accelerate the folding of proteins. The polypeptide is FK506-binding protein (fbp) (Neisseria meningitidis serogroup C).